The following is a 178-amino-acid chain: Stage V sporulation protein T (178 aa).

A SpoVT-AbrB domain is found at 5-51 (GIVRRIDDLGRVVIPKEIRRTLRIREGDPLEIFVDRDGEVILKKYSP). Residues 56–178 (GDFAKEYADA…AGFLARQMEQ (123 aa)) are GAF-like.

To B.subtilis AbrB and Abh. In terms of assembly, homotetramer. Two monomers dimerize via their N-terminal swapped-hairpin domains. These dimers further associate into tetramers through helical interactions between their C-terminal GAF-like domains.

Transcriptional factor that positively regulates or negatively the expression of a large number of forespore-specific sigma G-dependent genes. May provide a mechanism of feedback control that is important for forespore development. SpoVT levels during spore formation have a major impact on the germination and the resistance of the resultant spores. The chain is Stage V sporulation protein T from Bacillus subtilis (strain 168).